The chain runs to 494 residues: Membrane-bound lytic murein transglycosylase F 1 (494 aa).

Residues 1–24 form the signal peptide; that stretch reads MRIMAVRLVAGAITLALMAYAWLA. The tract at residues 25–270 is non-LT domain; it reads WERARDPEPI…TLLEEHFGHL (246 aa). The LT domain stretch occupies residues 271 to 494; the sequence is GRFDYVGFRA…APLPADPPAD (224 aa). The active site involves Glu-317. Positions 464–494 are disordered; the sequence is QVPAGEALGEPPLPTPPAPPGAPLPADPPAD. Positions 474–494 are enriched in pro residues; that stretch reads PPLPTPPAPPGAPLPADPPAD.

This sequence in the N-terminal section; belongs to the bacterial solute-binding protein 3 family. The protein in the C-terminal section; belongs to the transglycosylase Slt family.

Its subcellular location is the cell outer membrane. It catalyses the reaction Exolytic cleavage of the (1-&gt;4)-beta-glycosidic linkage between N-acetylmuramic acid (MurNAc) and N-acetylglucosamine (GlcNAc) residues in peptidoglycan, from either the reducing or the non-reducing ends of the peptidoglycan chains, with concomitant formation of a 1,6-anhydrobond in the MurNAc residue.. In terms of biological role, murein-degrading enzyme that degrades murein glycan strands and insoluble, high-molecular weight murein sacculi, with the concomitant formation of a 1,6-anhydromuramoyl product. Lytic transglycosylases (LTs) play an integral role in the metabolism of the peptidoglycan (PG) sacculus. Their lytic action creates space within the PG sacculus to allow for its expansion as well as for the insertion of various structures such as secretion systems and flagella. This chain is Membrane-bound lytic murein transglycosylase F 1, found in Alkalilimnicola ehrlichii (strain ATCC BAA-1101 / DSM 17681 / MLHE-1).